Here is a 585-residue protein sequence, read N- to C-terminus: MGIDSAHLIAQTILQGFDAQYGRFLEVTSGAQQRFEQADWHAVQQAMKKRINLYDHHVGLVVEQLKCIHSAFGYDEEYIAKVKVVYTGLLPDYPRFEIAESFFNSVYCRLFEHRNLTPDKLFIFTSQPARRFRDIPRPLSRDFFPNDNLALMLRTILNDLPLRLPWENLERDIYYITDYLQQTFPVGELLQATFQIANELFYRNKAAWLVGKIRIGGQVYPFLLPIHHNESGGIFIDTCLTDYADASIVFGFARSYFMVYAPLPAALVEWLREILPAKSTSELYMAIGCQKHGKTEYYREYLAFITFSKEQLIIAPGVKGMVMLVFTSPSFDRVFKVIKDQFAPQKEVTQERVQECYRLVKEHDRVGRMADTQEFENFVIDKARISPELMEELQKEVPEKLEDLGDKILIKHLYMERRMTPLNIYMEQVEERKLKDVIEEYGNAIKQLAAANIFPGDMLFKNFGVTRHGRVVFYDYDEICYMTEVNFRDIPPPRYPEDELAGEPWYSVAPNDVFPEEFRHFLCTDSRIRRYFEEMHSDLFKADYWRALQERIRSGHVEDVFAYRRKQRFSQRTEIETYSIAKVSA.

Residues 315–321 (APGVKGM) and Lys336 each bind ATP. Residue Asp371 is part of the active site.

The protein belongs to the AceK family.

The protein localises to the cytoplasm. The catalysed reaction is L-seryl-[isocitrate dehydrogenase] + ATP = O-phospho-L-seryl-[isocitrate dehydrogenase] + ADP + H(+). In terms of biological role, bifunctional enzyme which can phosphorylate or dephosphorylate isocitrate dehydrogenase (IDH) on a specific serine residue. This is a regulatory mechanism which enables bacteria to bypass the Krebs cycle via the glyoxylate shunt in response to the source of carbon. When bacteria are grown on glucose, IDH is fully active and unphosphorylated, but when grown on acetate or ethanol, the activity of IDH declines drastically concomitant with its phosphorylation. This Photorhabdus laumondii subsp. laumondii (strain DSM 15139 / CIP 105565 / TT01) (Photorhabdus luminescens subsp. laumondii) protein is Isocitrate dehydrogenase kinase/phosphatase.